We begin with the raw amino-acid sequence, 158 residues long: Male-specific protein scotti (158 aa).

The tract at residues 24-43 (NVPDGNGDGDGDGDGDGNDA) is disordered. Residues 30–42 (GDGDGDGDGDGND) are compositionally biased toward acidic residues.

This sequence belongs to the male-specific scotti family.

Its function is as follows. Post-meiotically transcribed gene that has a role in late spermiogenesis; required for actin cone progression during spermatid individualization. This chain is Male-specific protein scotti, found in Drosophila virilis (Fruit fly).